The following is a 381-amino-acid chain: Succinyl-diaminopimelate desuccinylase (381 aa).

His-68 provides a ligand contact to Zn(2+). Residue Asp-70 is part of the active site. Asp-101 contributes to the Zn(2+) binding site. The Proton acceptor role is filled by Glu-135. Positions 136, 164, and 350 each coordinate Zn(2+).

It belongs to the peptidase M20A family. DapE subfamily. In terms of assembly, homodimer. Zn(2+) serves as cofactor. Requires Co(2+) as cofactor.

The enzyme catalyses N-succinyl-(2S,6S)-2,6-diaminopimelate + H2O = (2S,6S)-2,6-diaminopimelate + succinate. Its pathway is amino-acid biosynthesis; L-lysine biosynthesis via DAP pathway; LL-2,6-diaminopimelate from (S)-tetrahydrodipicolinate (succinylase route): step 3/3. Catalyzes the hydrolysis of N-succinyl-L,L-diaminopimelic acid (SDAP), forming succinate and LL-2,6-diaminopimelate (DAP), an intermediate involved in the bacterial biosynthesis of lysine and meso-diaminopimelic acid, an essential component of bacterial cell walls. This Neisseria meningitidis serogroup C / serotype 2a (strain ATCC 700532 / DSM 15464 / FAM18) protein is Succinyl-diaminopimelate desuccinylase.